The chain runs to 187 residues: Peptidoglycan-recognition protein 2 (187 aa).

Positions 1-19 (MKAFLVALVVAIELTLVFA) are cleaved as a signal peptide. 2 cysteine pairs are disulfide-bonded: C21–C144 and C58–C64. Residues 43 to 170 (KPLKYVIIHH…RTVRPTDSPG (128 aa)) enclose the N-acetylmuramoyl-L-alanine amidase domain.

It belongs to the N-acetylmuramoyl-L-alanine amidase 2 family. As to expression, localizes to plasma (at protein level).

It is found in the secreted. In terms of biological role, peptidoglycan-recognition protein probably involved in innate immunity by binding to peptidoglycans (PGN) of bacteria and activating the prophenoloxidase (proPO) cascade immune response. Binds to 1,3-beta-D-glucan and PGN. This Holotrichia diomphalia (Korean black chafer) protein is Peptidoglycan-recognition protein 2 (PGRP-2).